The following is a 459-amino-acid chain: MNVAFEVKDRDVAGRLGRLEVNGRRLKTPALLPVVNPNKPTLDPREISKLGFDGVITNAYIIRKHEHLREQALEEGVHGLLGFDGFVMTDSGSFQLAEYGDVEVSNEEIVRFQAKIGSDVGTILDVPTPPDAPRSRVERDLETTLKRAREAVELDEHPPLALTVQGSTYEDLRRLCAEKLAELPAAVYPVGGVVPLLEEYRFVDVVRVVLAAKSSLPPHRPVHLFGCGHPLAIPLAVAMGCDLFDSASYAIYARSDRYMSILGTLKLEELETFPCSCPACTRHDPDDVREMEPRERTRVLATHNLYELRRVIETTRQAIVSGELWELAESVCRAHPRAWAGMVELARRGGELERWCPAVKRSVFVCDEVSKGRPELRLYRRRLRDRFGELSGRKVVKGISRPYAEIVEWLEPWELAFADEWLGVVPGELSWSYPCHCLVEPSGDDEGEDRRRGEEGRRR.

Asp-90 serves as the catalytic Nucleophile. Residues Asp-125 and Gly-192 each coordinate substrate. Residues Cys-275, Cys-277, and Cys-280 each coordinate Zn(2+).

This sequence belongs to the archaeosine tRNA-ribosyltransferase family. Zn(2+) serves as cofactor.

The catalysed reaction is guanosine(15) in tRNA + 7-cyano-7-deazaguanine = 7-cyano-7-carbaguanosine(15) in tRNA + guanine. It functions in the pathway tRNA modification; archaeosine-tRNA biosynthesis. Exchanges the guanine residue with 7-cyano-7-deazaguanine (preQ0) at position 15 in the dihydrouridine loop (D-loop) of archaeal tRNAs. In Methanopyrus kandleri (strain AV19 / DSM 6324 / JCM 9639 / NBRC 100938), this protein is tRNA-guanine(15) transglycosylase.